The following is a 616-amino-acid chain: ATP-dependent zinc metalloprotease FtsH 3 (616 aa).

The Cytoplasmic segment spans residues 1–9 (MSKNNKKWR). The chain crosses the membrane as a helical span at residues 10–30 (NAGLYALLLIVVLALASAFFD). Over 31 to 108 (RPTQTRETLS…VQPQSDEGFW (78 aa)) the chain is Lumenal. Residues 109–129 (FRIASTLFLPILLLVGIFFLF) form a helical membrane-spanning segment. Topologically, residues 130 to 616 (RRAQSGPGSQ…NNNAKLALLV (487 aa)) are cytoplasmic. Position 201 to 208 (201 to 208 (GPPGTGKT)) interacts with ATP. Residue H423 coordinates Zn(2+). E424 is an active-site residue. H427 and D504 together coordinate Zn(2+).

The protein in the central section; belongs to the AAA ATPase family. It in the C-terminal section; belongs to the peptidase M41 family. In terms of assembly, homohexamer (Potential). Part of a large complex that includes FtsH2 and PSII. Coimmunoprecipitates with YidC. It depends on Zn(2+) as a cofactor.

Its subcellular location is the cellular thylakoid membrane. In terms of biological role, acts as a processive, ATP-dependent zinc metallopeptidase for both cytoplasmic and membrane proteins. Plays a role in the quality control of integral membrane proteins. The polypeptide is ATP-dependent zinc metalloprotease FtsH 3 (Synechocystis sp. (strain ATCC 27184 / PCC 6803 / Kazusa)).